Reading from the N-terminus, the 305-residue chain is Ornithine carbamoyltransferase (305 aa).

Carbamoyl phosphate contacts are provided by residues 54–57, Gln81, Arg105, and 132–135; these read STRT and HPCQ. L-ornithine contacts are provided by residues Asn163, Asp220, and 224-225; that span reads SM. Carbamoyl phosphate-binding positions include 260–261 and Arg288; that span reads CL.

The protein belongs to the aspartate/ornithine carbamoyltransferase superfamily. OTCase family.

The protein resides in the cytoplasm. It catalyses the reaction carbamoyl phosphate + L-ornithine = L-citrulline + phosphate + H(+). It participates in amino-acid biosynthesis; L-arginine biosynthesis; L-arginine from L-ornithine and carbamoyl phosphate: step 1/3. Its function is as follows. Reversibly catalyzes the transfer of the carbamoyl group from carbamoyl phosphate (CP) to the N(epsilon) atom of ornithine (ORN) to produce L-citrulline. The chain is Ornithine carbamoyltransferase from Chromohalobacter salexigens (strain ATCC BAA-138 / DSM 3043 / CIP 106854 / NCIMB 13768 / 1H11).